The following is a 926-amino-acid chain: Coatomer subunit beta'-2 (926 aa).

WD repeat units follow at residues 13–52, 55–94, 97–136, 140–180, 183–224, 227–266, 269–309, 351–390, and 461–501; these read QRSE…MAKS, VTEL…KVKV, AHSD…ACTQ, GHSH…PNFT, AHQK…CVQT, GHTH…LENT, YGLE…ASMD, TCDL…RSFG, and RIDV…SHFD. The segment at 847-926 is disordered; the sequence is EEESLENGDM…GTNNEGNPSA (80 aa). Residues 868–887 are compositionally biased toward basic and acidic residues; sequence NEQRNEDDVAEHVEEHHEEK. A compositionally biased stretch (acidic residues) spans 888 to 900; that stretch reads EAEEEEGIVDGDS. Polar residues predominate over residues 917–926; the sequence is GTNNEGNPSA.

This sequence belongs to the WD repeat COPB2 family. Oligomeric complex that consists of at least the alpha, beta, beta', gamma, delta, epsilon and zeta subunits.

It is found in the cytoplasm. Its subcellular location is the golgi apparatus membrane. The protein localises to the cytoplasmic vesicle. It localises to the COPI-coated vesicle membrane. In terms of biological role, the coatomer is a cytosolic protein complex that binds to dilysine motifs and reversibly associates with Golgi non-clathrin-coated vesicles, which further mediate biosynthetic protein transport from the ER, via the Golgi up to the trans Golgi network. Coatomer complex is required for budding from Golgi membranes, and is essential for the retrograde Golgi-to-ER transport of dilysine-tagged proteins. The polypeptide is Coatomer subunit beta'-2 (Arabidopsis thaliana (Mouse-ear cress)).